A 174-amino-acid polypeptide reads, in one-letter code: Shikimate kinase 2 (174 aa).

An ATP-binding site is contributed by 12–17; it reads GAGKTT. Residues T16 and D32 each coordinate Mg(2+). Residues D34, R58, and G79 each contribute to the substrate site. The LID domain stretch occupies residues 112 to 126; it reads AEDPEEAQRPSLTGK. R120 lines the ATP pocket. A substrate-binding site is contributed by R139. Q155 is a binding site for ATP.

Belongs to the shikimate kinase family. AroL subfamily. Monomer. The cofactor is Mg(2+).

The protein localises to the cytoplasm. The catalysed reaction is shikimate + ATP = 3-phosphoshikimate + ADP + H(+). Its pathway is metabolic intermediate biosynthesis; chorismate biosynthesis; chorismate from D-erythrose 4-phosphate and phosphoenolpyruvate: step 5/7. Its function is as follows. Catalyzes the specific phosphorylation of the 3-hydroxyl group of shikimic acid using ATP as a cosubstrate. This is Shikimate kinase 2 from Yersinia pseudotuberculosis serotype IB (strain PB1/+).